We begin with the raw amino-acid sequence, 504 residues long: Glycerol kinase (504 aa).

Thr12 lines the ADP pocket. 3 residues coordinate ATP: Thr12, Thr13, and Ser14. Residue Thr12 participates in sn-glycerol 3-phosphate binding. Arg16 is a binding site for ADP. Sn-glycerol 3-phosphate-binding residues include Arg82, Glu83, Tyr134, and Asp246. Glycerol contacts are provided by Arg82, Glu83, Tyr134, Asp246, and Gln247. ADP is bound by residues Thr268 and Gly312. ATP is bound by residues Thr268, Gly312, Gln316, and Gly413. The ADP site is built by Gly413 and Asn417.

This sequence belongs to the FGGY kinase family.

It catalyses the reaction glycerol + ATP = sn-glycerol 3-phosphate + ADP + H(+). The protein operates within polyol metabolism; glycerol degradation via glycerol kinase pathway; sn-glycerol 3-phosphate from glycerol: step 1/1. Inhibited by fructose 1,6-bisphosphate (FBP). Its function is as follows. Key enzyme in the regulation of glycerol uptake and metabolism. Catalyzes the phosphorylation of glycerol to yield sn-glycerol 3-phosphate. The chain is Glycerol kinase from Renibacterium salmoninarum (strain ATCC 33209 / DSM 20767 / JCM 11484 / NBRC 15589 / NCIMB 2235).